The following is a 616-amino-acid chain: MTEGSQIFLLPISTSDSTKEPLSPVASKAQDPSLLSNRLMIEKQQEEAEWESINGLLMTHGFKPLCLVKGADLRDFIVFDKQSSQKMRQILKTLMEETTRQQSMIRELIETNQQLKSELQLEQNRAAHQEQRANDLQQIMDSVKSKIGELEDESLNRVCQQQNRIKDLQKEYKMLQMKCQQYKKNRMEQEGTIASLQKEIHRLAKEEEERILTQNRVFAHLCRRVPHSVLDKQLLCLIDYYECKLRKLHIQRQFEEDSQSEEKDFTNLGASPNYKGVLMSLQKQLKESKSRIDVLVGEKLSLQKDLENRPTEHELRLYKQQVKKLEKTLKKNIKLQDLIGQKKSDDTEKKDEPSKDSHQQALIEQSYFQVLCSINSIVHNPRAPVIIYKQSKGRAPNGNKDIGQDCGFEHLVPIIEMWVDELTSLKDLYKSLKILSAELVPWHSLKKLDEKEGVKVGDLLFMVDTMLEEVENQKETSSTPNSQTLQAIVSHFQKLFDVQSLNGVFPRMNEVYTRLGEMNNAVRNLQELLELDSSSSLCVVVSTVGKLCEIINKDVSEQVKQVLGPEDLQSIIKKLEEHEEFFPAFQAFANDLLEILEIDDLDAIVPAVKKLKILSY.

Coiled-coil stretches lie at residues 96-210 (EETT…EEER) and 273-335 (NYKG…NIKL). One copy of the TPR repeat lies at 502 to 535 (NGVFPRMNEVYTRLGEMNNAVRNLQELLELDSSS).

Directly interacts with tubulin-gamma; this interaction determines centrosomal localization.

Its subcellular location is the cytoplasm. It is found in the cytoskeleton. The protein resides in the microtubule organizing center. The protein localises to the centrosome. In terms of biological role, plays a role in the organization of both preexisting and nascent microtubules in interphase cells. During mitosis, required for the organization and orientation of the mitotic spindle. In Mus musculus (Mouse), this protein is Centrosomal protein of 70 kDa (Cep70).